The primary structure comprises 963 residues: MAVFPWHSRNRNYKAELASCRLETVPLECGDYHPLKPITVTESKTKKVSRKGSTSSTSSSSSSSVIDPLSSVLDGTDPLSMFAATSDPAATGTVTDSSRKKRDKDENSFVGPDFEPWANKRVEILARYTTTEKLSINLFMGSEKGRGGAAASAMSEKVRTRLEELDDFEEGSQKELLNLTQQDYVNRIEELNQSLKDAWASDQKVKALKIVIQCSKLLSDTSVIQFYPSKFVLITDILDTFGKLVYERISSMCVDSRSALPDHFSPENVNDTAKETCLNWFFKIASIRELIPRFYVEASILKCNKFLSKTGISECLPRLTCMIRGIGDPLVSVYARAYLCRVGIEVAPHLKESLNKNFFDFLLTFKQIHGDTVQNQLVAQGVELLSYLPLYSPAMGWIFQCVSYHAPEALLTEMMERCKKLGNNALLLNSVMSAFRAEFVATRSMDFIGMIKECDESGFPKHLLFRSLGLNLALADPPENDRLQILNEAWKVITKLKSPQDYINCAEVWVEYTCRHFTKREVNTVLADVIKHMTPDRAFEDSYPQLQSIIQKVIAHFHDFSVLFSVEKFLPFLDMFQKESVRVEVCKCIMEAFIKHQQEPTKDPVILNALLHICKTMHDSVNALTLEDEKRTLAHLINGFIKMVSFGRDFEQQLSFYVESRSMFCNLEPVLVQLIHSVNRLAMETRKVMKGNHSRKTAAFVRACVAYCFITIPSLVGIFTRLNLYLHSGQVALANQCLSQADAFFKAAIGLVPEVPKTISIDGKLRPSEPFLLEFLCNFFSTLLIVPDHPEHGVLFLVRELLNVIQDYTWEDSSDDKIRIYTSVLHLLSAMSQDTYLYHIDKVDSNDSLYGGDSKFLAENSKLCEAVMAQILEHLKTLAKDEALKRQSLLGLSFFNSILAHGDLRNNKLNQLSVNLWHLAQRHGCADTRTMVKTLDYIKKRSKQPDMNHLSELALRLPLQTRT.

Residues 43–112 (SKTKKVSRKG…DKDENSFVGP (70 aa)) form a disordered region. Low complexity predominate over residues 51 to 72 (KGSTSSTSSSSSSSVIDPLSSV). Phosphoserine is present on Ser-265. Residues 699–719 (AFVRACVAYCFITIPSLVGIF) traverse the membrane as a helical segment.

Belongs to the VPS35L family. In terms of assembly, component of the heterotrimeric retriever complex formed by VPS26C, VPS29 and VPS35L. Interacts with VPS29. Interacts with COMMD1, CCDC93 and CCDC22; associates with the CCC (COMMD/CCDC22/CCDC93) complex which contains at least COMMD1 (and possibly other COMM domain-containing proteins), CCDC22 and CCDC93. Interacts with WASHC1, WASHC2A and WASHC2C. Interacts with SNX17 and SNX31.

The protein resides in the membrane. The protein localises to the endosome. Acts as a component of the retriever complex. The retriever complex is a heterotrimeric complex related to retromer cargo-selective complex (CSC) and essential for retromer-independent retrieval and recycling of numerous cargos such as integrin alpha-5/beta-1 (ITGA5:ITGB1). The recruitment of the retriever complex to the endosomal membrane involves CCC and WASH complexes. In the endosomes, drives the retrieval and recycling of NxxY-motif-containing cargo proteins by coupling to SNX17, a cargo essential for the homeostatic maintenance of numerous cell surface proteins associated with processes that include cell migration, cell adhesion, nutrient supply and cell signaling. Involved in copper-dependent ATP7A trafficking between the trans-Golgi network and vesicles in the cell periphery; the function is proposed to depend on its association with the CCC complex and cooperation with the WASH complex on early endosomes. Seems not to be required for CCC complex stability. In Mus musculus (Mouse), this protein is VPS35 endosomal protein-sorting factor-like.